The chain runs to 52 residues: MKVKIGLKCSDCEDINYSTTKNAKTNTEKLELNKFCPRENKHTIHKEIKLKS.

Belongs to the bacterial ribosomal protein bL33 family.

This is Large ribosomal subunit protein bL33 from Helicobacter acinonychis (strain Sheeba).